The primary structure comprises 276 residues: Formamidopyrimidine-DNA glycosylase (276 aa).

P2 (schiff-base intermediate with DNA) is an active-site residue. E3 serves as the catalytic Proton donor. The active-site Proton donor; for beta-elimination activity is K58. DNA is bound by residues H94, R112, and R157. The segment at 242–276 adopts an FPG-type zinc-finger fold; it reads FVYDRAGEPCRVCGAPIRQIVQGQRSTYYCPNCQR. Residue R266 is the Proton donor; for delta-elimination activity of the active site.

Belongs to the FPG family. Monomer. The cofactor is Zn(2+).

The enzyme catalyses Hydrolysis of DNA containing ring-opened 7-methylguanine residues, releasing 2,6-diamino-4-hydroxy-5-(N-methyl)formamidopyrimidine.. It carries out the reaction 2'-deoxyribonucleotide-(2'-deoxyribose 5'-phosphate)-2'-deoxyribonucleotide-DNA = a 3'-end 2'-deoxyribonucleotide-(2,3-dehydro-2,3-deoxyribose 5'-phosphate)-DNA + a 5'-end 5'-phospho-2'-deoxyribonucleoside-DNA + H(+). Its function is as follows. Involved in base excision repair of DNA damaged by oxidation or by mutagenic agents. Acts as a DNA glycosylase that recognizes and removes damaged bases. Has a preference for oxidized purines, such as 7,8-dihydro-8-oxoguanine (8-oxoG). Has AP (apurinic/apyrimidinic) lyase activity and introduces nicks in the DNA strand. Cleaves the DNA backbone by beta-delta elimination to generate a single-strand break at the site of the removed base with both 3'- and 5'-phosphates. The sequence is that of Formamidopyrimidine-DNA glycosylase from Burkholderia thailandensis (strain ATCC 700388 / DSM 13276 / CCUG 48851 / CIP 106301 / E264).